The following is a 519-amino-acid chain: Histidine--tRNA ligase (519 aa).

It belongs to the class-II aminoacyl-tRNA synthetase family. In terms of assembly, homodimer.

The protein localises to the cytoplasm. The catalysed reaction is tRNA(His) + L-histidine + ATP = L-histidyl-tRNA(His) + AMP + diphosphate + H(+). The polypeptide is Histidine--tRNA ligase (Roseobacter denitrificans (strain ATCC 33942 / OCh 114) (Erythrobacter sp. (strain OCh 114))).